A 178-amino-acid chain; its full sequence is Oligoribonuclease (178 aa).

An Exonuclease domain is found at 7 to 168 (LIWIDLEMTG…DDIRESIAEL (162 aa)). Y128 is an active-site residue.

Belongs to the oligoribonuclease family.

It localises to the cytoplasm. Its function is as follows. 3'-to-5' exoribonuclease specific for small oligoribonucleotides. This chain is Oligoribonuclease, found in Francisella tularensis subsp. novicida (strain U112).